The primary structure comprises 599 residues: Aspartate--tRNA(Asp/Asn) ligase (599 aa).

Position 172 (Glu172) interacts with L-aspartate. The segment at 196 to 199 (QLFK) is aspartate. Residue Arg218 participates in L-aspartate binding. Residues 218–220 (RDE) and Gln227 contribute to the ATP site. Residue His454 participates in L-aspartate binding. Glu488 serves as a coordination point for ATP. Arg495 is an L-aspartate binding site. Residue 540 to 543 (GLDR) participates in ATP binding.

The protein belongs to the class-II aminoacyl-tRNA synthetase family. Type 1 subfamily. In terms of assembly, homodimer.

The protein resides in the cytoplasm. The catalysed reaction is tRNA(Asx) + L-aspartate + ATP = L-aspartyl-tRNA(Asx) + AMP + diphosphate. In terms of biological role, aspartyl-tRNA synthetase with relaxed tRNA specificity since it is able to aspartylate not only its cognate tRNA(Asp) but also tRNA(Asn). Reaction proceeds in two steps: L-aspartate is first activated by ATP to form Asp-AMP and then transferred to the acceptor end of tRNA(Asp/Asn). In Methylibium petroleiphilum (strain ATCC BAA-1232 / LMG 22953 / PM1), this protein is Aspartate--tRNA(Asp/Asn) ligase.